We begin with the raw amino-acid sequence, 484 residues long: Cysteine desulfurase, mitochondrial (484 aa).

Residues 29–42 are compositionally biased toward low complexity; that stretch reads LATSASTSSSTTTS. The tract at residues 29 to 69 is disordered; sequence LATSASTSSSTTTSNAETGELHVSTPLDSPSVHPPDGSSIS. Residues 153–154, asparagine 233, glutamine 261, and 281–283 each bind pyridoxal 5'-phosphate; these read AT and SSH. Lysine 284 carries the N6-(pyridoxal phosphate)lysine modification. Position 321 (threonine 321) interacts with pyridoxal 5'-phosphate. Catalysis depends on cysteine 408, which acts as the Cysteine persulfide intermediate. Cysteine 408 provides a ligand contact to [2Fe-2S] cluster.

The protein belongs to the class-V pyridoxal-phosphate-dependent aminotransferase family. NifS/IscS subfamily. The cofactor is pyridoxal 5'-phosphate.

It is found in the mitochondrion. It carries out the reaction (sulfur carrier)-H + L-cysteine = (sulfur carrier)-SH + L-alanine. Catalyzes the removal of elemental sulfur from cysteine to produce alanine. It supplies the inorganic sulfur for iron-sulfur (Fe-S) clusters. Plays a role in both tRNA-processing and mitochondrial metabolism. Involved in the 2-thio-modification of both 5-carboxymethylaminomethyl-2-thiouridine in mitochondrial tRNAs and 5-methoxycarbonylmethyl-2-thiouridine (mcm5s2U) in cytoplasmic tRNAs. The protein is Cysteine desulfurase, mitochondrial of Candida maltosa (Yeast).